Consider the following 491-residue polypeptide: Glutamine synthetase (491 aa).

One can recognise a GS beta-grasp domain in the interval 23 to 111; the sequence is NNVRQVLCAF…MFGNVYEAWG (89 aa). The GS catalytic domain maps to 119–491; it reads PRGYVAKRYE…PWEFMKYFDI (373 aa). 2 residues coordinate Mg(2+): glutamate 143 and glutamate 145. Residue glutamate 225 participates in ATP binding. Mg(2+) contacts are provided by glutamate 230 and glutamate 238. Residues 282–283 and alanine 283 each bind L-glutamate; that span reads NA. Histidine 287 is a binding site for Mg(2+). ATP is bound by residues 289 to 291 and serine 291; that span reads HQS. L-glutamate contacts are provided by arginine 344, glutamate 350, and arginine 362. Residues arginine 362 and arginine 367 each coordinate ATP. Glutamate 381 provides a ligand contact to Mg(2+). L-glutamate is bound at residue arginine 383.

The protein belongs to the glutamine synthetase family. Oligomer of 12 subunits arranged in the form of two hexagons. Mg(2+) is required as a cofactor.

The protein localises to the cytoplasm. It carries out the reaction L-glutamate + NH4(+) + ATP = L-glutamine + ADP + phosphate + H(+). Probably involved in nitrogen metabolism via ammonium assimilation. Catalyzes the ATP-dependent biosynthesis of glutamine from glutamate and ammonia. Beta-glutamate is a much poorer substrate than alpha-glutamate. This chain is Glutamine synthetase, found in Archaeoglobus fulgidus (strain ATCC 49558 / DSM 4304 / JCM 9628 / NBRC 100126 / VC-16).